Consider the following 123-residue polypeptide: Thioredoxin domain-containing protein 17 (123 aa).

Positions 41 to 123 constitute a Thioredoxin domain; the sequence is SWCPDCVKAE…DLVRMMFTED (83 aa). Residues C43 and C46 each act as nucleophile in the active site. C43 and C46 are oxidised to a cystine.

Belongs to the thioredoxin family.

The protein resides in the cytoplasm. Functionally, disulfide reductase. May participate in various redox reactions through the reversible oxidation of its active center dithiol to a disulfide and catalyze dithiol-disulfide exchange reactions. Has peroxidase activity and may contribute to the elimination of cellular hydrogen peroxide. The sequence is that of Thioredoxin domain-containing protein 17 (txndc17) from Danio rerio (Zebrafish).